We begin with the raw amino-acid sequence, 343 residues long: Ferrochelatase (343 aa).

2 residues coordinate Fe cation: His211 and Glu292.

The protein belongs to the ferrochelatase family.

The protein localises to the cytoplasm. The enzyme catalyses heme b + 2 H(+) = protoporphyrin IX + Fe(2+). It functions in the pathway porphyrin-containing compound metabolism; protoheme biosynthesis; protoheme from protoporphyrin-IX: step 1/1. Its function is as follows. Catalyzes the ferrous insertion into protoporphyrin IX. This is Ferrochelatase from Gluconobacter oxydans (strain 621H) (Gluconobacter suboxydans).